The following is a 389-amino-acid chain: Teichoic acid ribitol-phosphate primase (389 aa).

Belongs to the CDP-glycerol glycerophosphotransferase family.

Its subcellular location is the cell membrane. It catalyses the reaction 4-O-[(2R)-glycerylphospho]-N-acetyl-beta-D-mannosaminyl-(1-&gt;4)-N-acetyl-alpha-D-glucosaminyl di-trans,octa-cis-undecaprenyl diphosphate + CDP-L-ribitol = 4-O-[1-D-ribitylphospho-(2R)-1-glycerylphospho]-N-acetyl-beta-D-mannosaminyl-(1-&gt;4)-N-acetyl-alpha-D-glucosaminyl di-trans,octa-cis-undecaprenyl diphosphate + CMP + H(+). It participates in cell wall biogenesis; poly(ribitol phosphate) teichoic acid biosynthesis. Catalyzes the addition of a single ribitol phosphate unit onto the glycerol phosphate of the linkage unit, as a primer for polymerisation by TarL. The polypeptide is Teichoic acid ribitol-phosphate primase (tarK) (Bacillus spizizenii (strain ATCC 23059 / NRRL B-14472 / W23) (Bacillus subtilis subsp. spizizenii)).